We begin with the raw amino-acid sequence, 435 residues long: ATP-dependent protease ATPase subunit HslU (435 aa).

Residues isoleucine 18, glycine 60 to glutamate 65, aspartate 248, glutamate 313, and arginine 385 contribute to the ATP site.

It belongs to the ClpX chaperone family. HslU subfamily. As to quaternary structure, a double ring-shaped homohexamer of HslV is capped on each side by a ring-shaped HslU homohexamer. The assembly of the HslU/HslV complex is dependent on binding of ATP.

Its subcellular location is the cytoplasm. ATPase subunit of a proteasome-like degradation complex; this subunit has chaperone activity. The binding of ATP and its subsequent hydrolysis by HslU are essential for unfolding of protein substrates subsequently hydrolyzed by HslV. HslU recognizes the N-terminal part of its protein substrates and unfolds these before they are guided to HslV for hydrolysis. This Rhizobium etli (strain ATCC 51251 / DSM 11541 / JCM 21823 / NBRC 15573 / CFN 42) protein is ATP-dependent protease ATPase subunit HslU.